The sequence spans 348 residues: Holliday junction branch migration complex subunit RuvB (348 aa).

Positions methionine 1–serine 10 are enriched in polar residues. Residues methionine 1 to leucine 41 are disordered. The tract at residues proline 13–tyrosine 197 is large ATPase domain (RuvB-L). Positions serine 28 to leucine 41 are enriched in basic and acidic residues. ATP contacts are provided by leucine 36, arginine 37, glycine 78, lysine 81, threonine 82, threonine 83, arginine 187, tyrosine 197, and arginine 234. Threonine 82 contacts Mg(2+). Positions glycine 198–arginine 269 are small ATPAse domain (RuvB-S). The segment at histidine 272–alanine 348 is head domain (RuvB-H). DNA-binding residues include arginine 327 and arginine 332.

The protein belongs to the RuvB family. Homohexamer. Forms an RuvA(8)-RuvB(12)-Holliday junction (HJ) complex. HJ DNA is sandwiched between 2 RuvA tetramers; dsDNA enters through RuvA and exits via RuvB. An RuvB hexamer assembles on each DNA strand where it exits the tetramer. Each RuvB hexamer is contacted by two RuvA subunits (via domain III) on 2 adjacent RuvB subunits; this complex drives branch migration. In the full resolvosome a probable DNA-RuvA(4)-RuvB(12)-RuvC(2) complex forms which resolves the HJ.

The protein localises to the cytoplasm. It catalyses the reaction ATP + H2O = ADP + phosphate + H(+). Its function is as follows. The RuvA-RuvB-RuvC complex processes Holliday junction (HJ) DNA during genetic recombination and DNA repair, while the RuvA-RuvB complex plays an important role in the rescue of blocked DNA replication forks via replication fork reversal (RFR). RuvA specifically binds to HJ cruciform DNA, conferring on it an open structure. The RuvB hexamer acts as an ATP-dependent pump, pulling dsDNA into and through the RuvAB complex. RuvB forms 2 homohexamers on either side of HJ DNA bound by 1 or 2 RuvA tetramers; 4 subunits per hexamer contact DNA at a time. Coordinated motions by a converter formed by DNA-disengaged RuvB subunits stimulates ATP hydrolysis and nucleotide exchange. Immobilization of the converter enables RuvB to convert the ATP-contained energy into a lever motion, pulling 2 nucleotides of DNA out of the RuvA tetramer per ATP hydrolyzed, thus driving DNA branch migration. The RuvB motors rotate together with the DNA substrate, which together with the progressing nucleotide cycle form the mechanistic basis for DNA recombination by continuous HJ branch migration. Branch migration allows RuvC to scan DNA until it finds its consensus sequence, where it cleaves and resolves cruciform DNA. This Parasynechococcus marenigrum (strain WH8102) protein is Holliday junction branch migration complex subunit RuvB.